A 163-amino-acid polypeptide reads, in one-letter code: MITRGRVWRFGDNVSTDTITPGRYNLTKDPEELARIAFIEARPEFSREVKPGDVVVGGRNFGIGSSRESAALSLKAAGVAGVIAESFGRIFYRNAVNLGLPLLVGDTSGLRDGEVVEVNWRTGEVRTENGVFHFKPLDGFLLRIVEEGGILSFIARRGDLCIE.

Belongs to the LeuD family. LeuD type 2 subfamily. Heterodimer of LeuC and LeuD.

It catalyses the reaction (2R,3S)-3-isopropylmalate = (2S)-2-isopropylmalate. Its pathway is amino-acid biosynthesis; L-leucine biosynthesis; L-leucine from 3-methyl-2-oxobutanoate: step 2/4. Functionally, catalyzes the isomerization between 2-isopropylmalate and 3-isopropylmalate, via the formation of 2-isopropylmaleate. The chain is 3-isopropylmalate dehydratase small subunit from Thermococcus kodakarensis (strain ATCC BAA-918 / JCM 12380 / KOD1) (Pyrococcus kodakaraensis (strain KOD1)).